Reading from the N-terminus, the 286-residue chain is ATP synthase gamma chain (286 aa).

This sequence belongs to the ATPase gamma chain family. As to quaternary structure, F-type ATPases have 2 components, CF(1) - the catalytic core - and CF(0) - the membrane proton channel. CF(1) has five subunits: alpha(3), beta(3), gamma(1), delta(1), epsilon(1). CF(0) has three main subunits: a, b and c.

The protein localises to the cell inner membrane. Its function is as follows. Produces ATP from ADP in the presence of a proton gradient across the membrane. The gamma chain is believed to be important in regulating ATPase activity and the flow of protons through the CF(0) complex. The polypeptide is ATP synthase gamma chain (Teredinibacter turnerae (strain ATCC 39867 / T7901)).